Reading from the N-terminus, the 63-residue chain is Large ribosomal subunit protein uL30 (63 aa).

The protein belongs to the universal ribosomal protein uL30 family. In terms of assembly, part of the 50S ribosomal subunit.

The protein is Large ribosomal subunit protein uL30 of Rickettsia africae (strain ESF-5).